Consider the following 172-residue polypeptide: 3-hydroxydecanoyl-[acyl-carrier-protein] dehydratase (172 aa).

Residue His-71 is part of the active site.

It belongs to the thioester dehydratase family. FabA subfamily. As to quaternary structure, homodimer.

The protein resides in the cytoplasm. The catalysed reaction is a (3R)-hydroxyacyl-[ACP] = a (2E)-enoyl-[ACP] + H2O. The enzyme catalyses (3R)-hydroxydecanoyl-[ACP] = (2E)-decenoyl-[ACP] + H2O. It catalyses the reaction (2E)-decenoyl-[ACP] = (3Z)-decenoyl-[ACP]. The protein operates within lipid metabolism; fatty acid biosynthesis. In terms of biological role, necessary for the introduction of cis unsaturation into fatty acids. Catalyzes the dehydration of (3R)-3-hydroxydecanoyl-ACP to E-(2)-decenoyl-ACP and then its isomerization to Z-(3)-decenoyl-ACP. Can catalyze the dehydratase reaction for beta-hydroxyacyl-ACPs with saturated chain lengths up to 16:0, being most active on intermediate chain length. The protein is 3-hydroxydecanoyl-[acyl-carrier-protein] dehydratase of Pseudoalteromonas atlantica (strain T6c / ATCC BAA-1087).